Consider the following 266-residue polypeptide: Imidazole glycerol phosphate synthase subunit HisF (266 aa).

Active-site residues include aspartate 11 and aspartate 130.

Belongs to the HisA/HisF family. Heterodimer of HisH and HisF.

Its subcellular location is the cytoplasm. It catalyses the reaction 5-[(5-phospho-1-deoxy-D-ribulos-1-ylimino)methylamino]-1-(5-phospho-beta-D-ribosyl)imidazole-4-carboxamide + L-glutamine = D-erythro-1-(imidazol-4-yl)glycerol 3-phosphate + 5-amino-1-(5-phospho-beta-D-ribosyl)imidazole-4-carboxamide + L-glutamate + H(+). It participates in amino-acid biosynthesis; L-histidine biosynthesis; L-histidine from 5-phospho-alpha-D-ribose 1-diphosphate: step 5/9. Its function is as follows. IGPS catalyzes the conversion of PRFAR and glutamine to IGP, AICAR and glutamate. The HisF subunit catalyzes the cyclization activity that produces IGP and AICAR from PRFAR using the ammonia provided by the HisH subunit. The chain is Imidazole glycerol phosphate synthase subunit HisF from Delftia acidovorans (strain DSM 14801 / SPH-1).